We begin with the raw amino-acid sequence, 349 residues long: Magnesium-protoporphyrin IX monomethyl ester [oxidative] cyclase (349 aa).

A compositionally biased stretch (low complexity) spans 1-10 (MTATTATAPA). The disordered stretch occupies residues 1–23 (MTATTATAPAMRGGGRNELPPHL).

It belongs to the AcsF family. Requires Fe cation as cofactor.

The catalysed reaction is Mg-protoporphyrin IX 13-monomethyl ester + 3 NADPH + 3 O2 + 2 H(+) = 3,8-divinyl protochlorophyllide a + 3 NADP(+) + 5 H2O. The protein operates within porphyrin-containing compound metabolism; chlorophyll biosynthesis (light-independent). Functionally, catalyzes the formation of the isocyclic ring in chlorophyll biosynthesis. Mediates the cyclase reaction, which results in the formation of divinylprotochlorophyllide (Pchlide) characteristic of all chlorophylls from magnesium-protoporphyrin IX 13-monomethyl ester (MgPMME). The protein is Magnesium-protoporphyrin IX monomethyl ester [oxidative] cyclase of Prochlorococcus marinus (strain MIT 9303).